The sequence spans 360 residues: Dihydroorotate dehydrogenase (quinone) (360 aa).

Residues 66-70 (AGFDK) and Thr-90 each bind FMN. Lys-70 lines the substrate pocket. 115 to 119 (NRMGF) lines the substrate pocket. The FMN site is built by Asn-143 and Asn-176. Position 176 (Asn-176) interacts with substrate. Ser-179 serves as the catalytic Nucleophile. Substrate is bound at residue Asn-181. FMN contacts are provided by Lys-212 and Thr-240. Substrate is bound at residue 241–242 (NT). FMN is bound by residues Gly-264, Gly-293, and 314-315 (YT).

The protein belongs to the dihydroorotate dehydrogenase family. Type 2 subfamily. In terms of assembly, monomer. It depends on FMN as a cofactor.

It localises to the cell membrane. It carries out the reaction (S)-dihydroorotate + a quinone = orotate + a quinol. Its pathway is pyrimidine metabolism; UMP biosynthesis via de novo pathway; orotate from (S)-dihydroorotate (quinone route): step 1/1. Its function is as follows. Catalyzes the conversion of dihydroorotate to orotate with quinone as electron acceptor. The protein is Dihydroorotate dehydrogenase (quinone) of Mycobacterium marinum (strain ATCC BAA-535 / M).